The primary structure comprises 134 residues: ATP synthase epsilon chain, chloroplastic (134 aa).

The protein belongs to the ATPase epsilon chain family. In terms of assembly, F-type ATPases have 2 components, CF(1) - the catalytic core - and CF(0) - the membrane proton channel. CF(1) has five subunits: alpha(3), beta(3), gamma(1), delta(1), epsilon(1). CF(0) has three main subunits: a, b and c.

The protein localises to the plastid. The protein resides in the chloroplast thylakoid membrane. In terms of biological role, produces ATP from ADP in the presence of a proton gradient across the membrane. In Pyropia yezoensis (Susabi-nori), this protein is ATP synthase epsilon chain, chloroplastic.